We begin with the raw amino-acid sequence, 166 residues long: Urease accessory protein UreE (166 aa).

The tract at residues 135-156 (EQGAYGGGHHHSHHGDEEFNYG) is disordered.

This sequence belongs to the UreE family.

It is found in the cytoplasm. Its function is as follows. Involved in urease metallocenter assembly. Binds nickel. Probably functions as a nickel donor during metallocenter assembly. This Ectopseudomonas mendocina (strain ymp) (Pseudomonas mendocina) protein is Urease accessory protein UreE.